The chain runs to 1391 residues: Axoneme-associated protein mst101(2) (1391 aa).

Disordered stretches follow at residues Glu170–Leu213 and Ser280–Leu300. Over residues Thr184–Ser201 the composition is skewed to basic residues. Over residues Lys291 to Leu300 the composition is skewed to basic and acidic residues. Repeat copies occupy residues Lys332–Glu347, Lys348–Glu363, Lys364–Glu379, Lys380–Glu395, Lys396–Glu411, Lys412–Glu427, Arg428–Glu443, Lys444–Glu459, Arg460–Glu475, Lys476–Glu491, Arg492–Ile507, Lys508–Glu523, Lys524–Glu539, Lys540–Glu555, Lys556–Glu571, Lys572–Glu587, Lys588–Glu603, Arg604–Glu619, Lys620–Glu635, Arg636–Glu651, Lys652–Glu667, Lys668–Glu683, Lys684–Glu699, Lys700–Glu715, Arg716–Glu731, Lys732–Lys747, Asn748–Glu763, Lys764–Lys779, Lys780–Lys795, Lys796–Lys811, Lys812–Lys827, Lys828–Lys843, Lys844–Lys859, Lys860–Lys875, Lys876–Lys891, Lys892–Lys907, Lys908–Lys923, Lys924–Lys939, Lys940–Asn955, Lys956–Leu971, Gly972–Ala987, Ala988–Arg1003, Ala1004–Arg1019, Ala1020–Arg1035, Ala1036–Arg1051, Ala1052–Arg1067, Ala1068–Arg1083, Ala1084–Arg1099, Ala1100–Arg1115, Ala1116–Ala1131, Ala1132–Ala1147, Ala1148–Ala1163, Ala1164–Ala1179, Ala1180–Leu1195, Ala1196–Ala1211, Ala1212–Ala1227, Ala1228–Ala1243, Ala1244–Ala1259, and Ala1260–Ala1275. The tract at residues Lys332–Ala1275 is 59 X 16 AA approximate tandem repeats of [KR]-K-X-C-X-X-X-A-K-X-X-K-X-X-X-E. Residues Leu370 to Lys429 are disordered. A disordered region spans residues Lys516–Lys577. The segment covering Lys517–Lys577 has biased composition (basic and acidic residues). Residues Ala729 to Lys765 are compositionally biased toward basic residues. 3 disordered regions span residues Ala729–Ala881, Glu900–Arg922, and Lys934–Lys1013. Residues Lys766–Ala881 are compositionally biased toward basic and acidic residues. Composition is skewed to basic residues over residues Lys934–Lys949 and Lys956–Lys976. The segment covering Arg977–Lys1013 has biased composition (basic and acidic residues). 2 disordered regions span residues Glu1076 to Gln1095 and Lys1104 to Ala1212. A compositionally biased stretch (basic and acidic residues) spans Lys1353–Lys1370. Residues Lys1353–Cys1391 form a disordered region. Residues Asn1371–Cys1391 are compositionally biased toward basic residues.

As to expression, testis. Primary spermatocytes and early spermatids.

The protein localises to the cytoplasm. Possible structural role in the sperm tail. The polypeptide is Axoneme-associated protein mst101(2) (mst101(2)) (Drosophila hydei (Fruit fly)).